The sequence spans 1495 residues: Collagen alpha-1(XVII) chain (1495 aa).

Positions 1–17 (MDSVTKKTRQDGSEVTE) are enriched in basic and acidic residues. Residues 1–138 (MDSVTKKTRQ…VRLQSASPSG (138 aa)) form a disordered region. Residues 1–435 (MDSVTKKTRQ…CGSCCSWWKW (435 aa)) are Cytoplasmic-facing. The nonhelical region (NC16) stretch occupies residues 1–535 (MDSVTKKTRQ…IERGYFRGER (535 aa)). Positions 19–32 (QGGSSSGLKTSSHT) are enriched in polar residues. Residues 51–63 (SSGSGRLNSSSSG) show a composition bias toward low complexity. Polar residues-rich tracts occupy residues 64–80 (YRQTQSPSSTLTKSPGS) and 95–104 (EGSSSANSSP). The chain crosses the membrane as a helical; Signal-anchor for type II membrane protein span at residues 436-456 (LLGLLLAWLLLLGLLFGLIAL). At 457–1495 (AEEVRKLKSR…GRRRRRSVGV (1039 aa)) the chain is on the extracellular side. 7 disordered regions span residues 532–824 (RGER…EKGS), 847–999 (DLQG…SSSQ), 1160–1185 (EFSGLVGPPGPAGPPGPPGIPGSSGI), 1201–1226 (SISGIQGPPGPPGPPGPPGFSGTGLL), 1251–1278 (RSYISGPPGPPGPRGPPGPKGDSGLVAG), 1295–1336 (GGSI…GSYG), and 1396–1416 (MSYTGQGPPGPPGPPGPPGIS). The segment at 536–1482 (GEPGMKGDMG…KGEKGEKGEQ (947 aa)) is triple-helical region. Composition is skewed to low complexity over residues 702–711 (PGAKGPAGQA) and 761–773 (RPGAKGEPGAPGK). Over residues 786-807 (PGPPGPPGPIGPTGPPGVPGPV) the composition is skewed to pro residues. Low complexity predominate over residues 809 to 818 (PAGLPGQQGP). Pro residues-rich tracts occupy residues 871 to 886 (PRGPPGLPGPSGPPGR), 901 to 910 (PPGPPGPPGP), 946 to 955 (PPGPPGPPGP), 981 to 993 (PPGPPGPPGPPGP), 1167 to 1179 (PPGPAGPPGPPGI), 1208 to 1218 (PPGPPGPPGPP), and 1257 to 1269 (PPGPPGPRGPPGP). Residues 1296–1308 (GSIGAEGSHGGSL) are compositionally biased toward gly residues. A compositionally biased stretch (low complexity) spans 1309–1336 (GASSSYGSSMSSSMSSYSASMGSDGSYG). Positions 1403–1413 (PPGPPGPPGPP) are enriched in pro residues. Residue N1424 is glycosylated (N-linked (GlcNAc...) asparagine). The interval 1435–1495 (THGTVRGPPG…GRRRRRSVGV (61 aa)) is disordered. Residues 1472 to 1481 (PKGEKGEKGE) are compositionally biased toward basic and acidic residues. Residues 1483-1495 (MYSGRRRRRSVGV) form a nonhelical region (NC1) region. A compositionally biased stretch (basic residues) spans 1486–1495 (GRRRRRSVGV).

In terms of assembly, homotrimers of alpha 1(XVII)chains. Post-translationally, the intracellular/endo domain is disulfide-linked. In terms of processing, prolines at the third position of the tripeptide repeating unit (G-X-Y) are hydroxylated in some or all of the chains. The ectodomain is shedded from the surface of keratinocytes resulting in a 120-kDa soluble form, also named as 120 kDa linear IgA disease antigen homolog. The shedding is mediated by membrane-bound metalloproteases. Cornea specific.

It is found in the cell junction. It localises to the hemidesmosome. The protein resides in the membrane. Its subcellular location is the secreted. The protein localises to the extracellular space. It is found in the extracellular matrix. It localises to the basement membrane. Functionally, may play a role in the integrity of hemidesmosome and the attachment of basal keratinocytes to the underlying basement membrane. Its function is as follows. The 120 kDa linear IgA disease antigen homolog is an anchoring filament component involved in dermal-epidermal cohesion. The sequence is that of Collagen alpha-1(XVII) chain (COL17A1) from Gallus gallus (Chicken).